The sequence spans 47 residues: Turripeptide Ici9.1 (47 aa).

3 cysteine pairs are disulfide-bonded: Cys1-Cys31, Cys5-Cys24, and Cys13-Cys45. Residues Cys1–Gln47 form the Kazal-like domain.

This sequence belongs to the conopeptide P-like superfamily. Expressed by the venom duct.

The protein resides in the secreted. Its function is as follows. Acts as a neurotoxin by inhibiting an ion channel. May also act as a serine protease inhibitor, since it possess the kazal serine protease inhibitor signature. This chain is Turripeptide Ici9.1, found in Iotyrris cingulifera (Sea snail).